Reading from the N-terminus, the 286-residue chain is Polyamine aminopropyltransferase (286 aa).

One can recognise a PABS domain in the interval 2 to 237 (DLWFSEVHTP…GYWLFGFASK (236 aa)). Q31 contributes to the S-methyl-5'-thioadenosine binding site. D86 is a spermidine binding site. S-methyl-5'-thioadenosine is bound by residues E106 and 137-138 (NG). D155 serves as the catalytic Proton acceptor.

It belongs to the spermidine/spermine synthase family. Homodimer or homotetramer.

Its subcellular location is the cytoplasm. The enzyme catalyses S-adenosyl 3-(methylsulfanyl)propylamine + putrescine = S-methyl-5'-thioadenosine + spermidine + H(+). Its pathway is amine and polyamine biosynthesis; spermidine biosynthesis; spermidine from putrescine: step 1/1. In terms of biological role, catalyzes the irreversible transfer of a propylamine group from the amino donor S-adenosylmethioninamine (decarboxy-AdoMet) to putrescine (1,4-diaminobutane) to yield spermidine. The chain is Polyamine aminopropyltransferase from Streptococcus pneumoniae serotype 4 (strain ATCC BAA-334 / TIGR4).